A 360-amino-acid polypeptide reads, in one-letter code: ACT1-like protein (360 aa).

The segment at 339–360 (KKQSHNNANDHHEDSMNYSITQ) is disordered.

In terms of assembly, interacts with the receptor complex composed of ilcr-1 and ilcr-2. Also interacts with pik-1. Expressed in neurons.

Functionally, may act as an adapter to facilitate downstream signaling for the receptor complex composed of ilcr-1 and ilcr-2, which is a signaling complex that modulates neuronal activity and animal behavior in response to sensory neuron input. The protein is ACT1-like protein of Caenorhabditis elegans.